Consider the following 65-residue polypeptide: Large ribosomal subunit protein bL35 (65 aa).

Positions 1–25 (MPKMKSHRGAAKRFKKTGTGKLKRA) are disordered.

The protein belongs to the bacterial ribosomal protein bL35 family.

This Clostridium botulinum (strain Alaska E43 / Type E3) protein is Large ribosomal subunit protein bL35.